The following is a 210-amino-acid chain: Phosphate propanoyltransferase (210 aa).

26–28 (VSN) is a binding site for CoA. Zn(2+)-binding residues include H30 and H32. Residues K71 and R78 each coordinate CoA. R84 contacts phosphate. Zn(2+)-binding residues include E90, H138, H140, and H186. N193 provides a ligand contact to CoA.

It belongs to the PduL family. As to quaternary structure, monomer, when purified in the absence of the encapsulation peptide (EP, residues 1-27). The EP may influence oligomerization. It depends on Zn(2+) as a cofactor.

The protein localises to the bacterial microcompartment. It catalyses the reaction propanoyl-CoA + phosphate = propanoyl phosphate + CoA. Its pathway is polyol metabolism; 1,2-propanediol degradation. Functionally, involved in 1,2-propanediol (1,2-PD) utilization in the bacterial microcompartment (BMC) dedicated to 1,2-PD degradation by catalyzing the conversion of propanoyl-CoA to propanoyl-phosphate. Also able to catalyze the reverse reaction. Also has phosphate acetyltransferase activity to a lesser extent. Required for optimal growth on 1,2-PD when the BMC is intact. CoA is regenerated within the BMC (for use by PduP) via this enzyme, although there must also be cofactor transport across the BMC. Directly targeted to the BMC. The 1,2-PD-specific bacterial microcompartment (BMC) concentrates low levels of 1,2-PD catabolic enzymes, concentrates volatile reaction intermediates thus enhancing pathway flux and keeps the level of toxic, mutagenic propionaldehyde low. The chain is Phosphate propanoyltransferase from Salmonella typhimurium (strain LT2 / SGSC1412 / ATCC 700720).